The primary structure comprises 458 residues: Probable Xaa-Pro aminopeptidase pepP (458 aa).

Positions 254, 265, 388, and 428 each coordinate Mn(2+).

This sequence belongs to the peptidase M24B family. Requires Mn(2+) as cofactor.

The enzyme catalyses Release of any N-terminal amino acid, including proline, that is linked to proline, even from a dipeptide or tripeptide.. Its function is as follows. Catalyzes the removal of a penultimate prolyl residue from the N-termini of peptides. The polypeptide is Probable Xaa-Pro aminopeptidase pepP (pepP) (Botryotinia fuckeliana (strain B05.10) (Noble rot fungus)).